Reading from the N-terminus, the 132-residue chain is Small ribosomal subunit protein uS11 (132 aa).

It belongs to the universal ribosomal protein uS11 family. Part of the 30S ribosomal subunit. Interacts with proteins S7 and S18. Binds to IF-3.

Its function is as follows. Located on the platform of the 30S subunit, it bridges several disparate RNA helices of the 16S rRNA. Forms part of the Shine-Dalgarno cleft in the 70S ribosome. The polypeptide is Small ribosomal subunit protein uS11 (Clostridioides difficile (strain 630) (Peptoclostridium difficile)).